A 320-amino-acid polypeptide reads, in one-letter code: Phosphatidylserine decarboxylase proenzyme (320 aa).

Catalysis depends on charge relay system; for autoendoproteolytic cleavage activity residues Asp-90, His-147, and Ser-254. Ser-254 acts as the Schiff-base intermediate with substrate; via pyruvic acid; for decarboxylase activity in catalysis. Pyruvic acid (Ser); by autocatalysis is present on Ser-254. The interval 288-320 is disordered; the sequence is EASTAAEPAPLPEEEIRAEHRASPLVDDTQDQG.

It belongs to the phosphatidylserine decarboxylase family. PSD-B subfamily. Prokaryotic type I sub-subfamily. Heterodimer of a large membrane-associated beta subunit and a small pyruvoyl-containing alpha subunit. It depends on pyruvate as a cofactor. In terms of processing, is synthesized initially as an inactive proenzyme. Formation of the active enzyme involves a self-maturation process in which the active site pyruvoyl group is generated from an internal serine residue via an autocatalytic post-translational modification. Two non-identical subunits are generated from the proenzyme in this reaction, and the pyruvate is formed at the N-terminus of the alpha chain, which is derived from the carboxyl end of the proenzyme. The autoendoproteolytic cleavage occurs by a canonical serine protease mechanism, in which the side chain hydroxyl group of the serine supplies its oxygen atom to form the C-terminus of the beta chain, while the remainder of the serine residue undergoes an oxidative deamination to produce ammonia and the pyruvoyl prosthetic group on the alpha chain. During this reaction, the Ser that is part of the protease active site of the proenzyme becomes the pyruvoyl prosthetic group, which constitutes an essential element of the active site of the mature decarboxylase.

It is found in the cell membrane. The catalysed reaction is a 1,2-diacyl-sn-glycero-3-phospho-L-serine + H(+) = a 1,2-diacyl-sn-glycero-3-phosphoethanolamine + CO2. Its pathway is phospholipid metabolism; phosphatidylethanolamine biosynthesis; phosphatidylethanolamine from CDP-diacylglycerol: step 2/2. Catalyzes the formation of phosphatidylethanolamine (PtdEtn) from phosphatidylserine (PtdSer). The polypeptide is Phosphatidylserine decarboxylase proenzyme (Klebsiella pneumoniae (strain 342)).